The primary structure comprises 79 residues: Small proline-rich protein 4 (79 aa).

The span at 1–26 (MSSQQQQRQQQQCPPQRAQQQQVKQP) shows a compositional bias: low complexity. The disordered stretch occupies residues 1–79 (MSSQQQQRQQ…AQQASKSKQK (79 aa)). The segment covering 66-79 (KCPSAQQASKSKQK) has biased composition (polar residues).

This sequence belongs to the cornifin (SPRR) family. Post-translationally, cross-linked to membrane proteins by transglutaminase.

It is found in the cytoplasm. It localises to the cell cortex. Functionally, cross-linked envelope protein of keratinocytes. Involved in UV-induced cornification. In Homo sapiens (Human), this protein is Small proline-rich protein 4 (SPRR4).